The following is a 463-amino-acid chain: Asparagine--tRNA ligase (463 aa).

This sequence belongs to the class-II aminoacyl-tRNA synthetase family. Homodimer.

Its subcellular location is the cytoplasm. It catalyses the reaction tRNA(Asn) + L-asparagine + ATP = L-asparaginyl-tRNA(Asn) + AMP + diphosphate + H(+). The protein is Asparagine--tRNA ligase of Bacillus cereus (strain ATCC 10987 / NRS 248).